We begin with the raw amino-acid sequence, 297 residues long: L-ribulose 3-epimerase (297 aa).

Glu147 functions as the Proton donor/acceptor in the catalytic mechanism. Mn(2+) is bound at residue Glu147. Substrate contacts are provided by residues Glu153 and 180 to 183 (DTFH). Positions 180 and 206 each coordinate Mn(2+). Residue Arg212 participates in substrate binding. Catalysis depends on Glu241, which acts as the Proton donor/acceptor. Glu241 is a Mn(2+) binding site.

This sequence belongs to the hyi family. Homotetramer. Mn(2+) is required as a cofactor.

It carries out the reaction L-ribulose = L-xylulose. The catalysed reaction is keto-D-tagatose = keto-D-sorbose. The enzyme catalyses D-allulose = keto-D-fructose. Strongly inhibited by Co(2+) and Ni(2+), and slightly inhibited by EDTA. Its function is as follows. Catalyzes the epimerization of various ketoses at the C(3) position. It is able to interconvert L-ribulose with high efficiency. The enzyme can also accept other ketopentoses such as D-psicose and D-tagatose with lower efficiency. The polypeptide is L-ribulose 3-epimerase (Mesorhizobium japonicum (strain LMG 29417 / CECT 9101 / MAFF 303099) (Mesorhizobium loti (strain MAFF 303099))).